The following is a 728-amino-acid chain: Catalase-peroxidase 1 (728 aa).

The first 22 residues, 1–22 (MDKTQSSQGKCPVMHGANSAVA), serve as a signal peptide directing secretion. Positions 97–225 (WHSAGTYRVA…LAAVMMGLIY (129 aa)) form a cross-link, tryptophyl-tyrosyl-methioninium (Trp-Tyr) (with M-251). The active-site Proton acceptor is histidine 98. Positions 225 to 251 (YVNPEGVDGKPDPLRTAQDVRVTFARM) form a cross-link, tryptophyl-tyrosyl-methioninium (Tyr-Met) (with W-97). A heme b-binding site is contributed by histidine 266.

This sequence belongs to the peroxidase family. Peroxidase/catalase subfamily. Homodimer or homotetramer. It depends on heme b as a cofactor. Post-translationally, formation of the three residue Trp-Tyr-Met cross-link is important for the catalase, but not the peroxidase activity of the enzyme.

It carries out the reaction H2O2 + AH2 = A + 2 H2O. It catalyses the reaction 2 H2O2 = O2 + 2 H2O. Its function is as follows. Bifunctional enzyme with both catalase and broad-spectrum peroxidase activity. The sequence is that of Catalase-peroxidase 1 from Shewanella sp. (strain MR-7).